A 315-amino-acid polypeptide reads, in one-letter code: MSESLRIIFAGTPDFAARHLDALLSSGHNVVGVFTQPDRPAGRGKKLMPSPVKVLAEEKGLPVFQPVSLRPQENQQLVADLQADVMVVVAYGLILPKAVLEMPRLGCINVHGSLLPRWRGAAPIQRSLWAGDAETGVTIMQMDVGLDTGDMLYKLSCPITAEDTSGTLYDKLAELGPQGLITTLKQLADGTAKPEVQDETLVTYAEKLSKEEARIDWSLSAAQLERYIRAFNPWPMSWLEIERQPVKVWKASVIDTATNAAPGTILEANKQGIQVATGDGILNLLSLQPAGKKAMSAQDLLNSRREWFVPGNRLA.

113 to 116 contacts (6S)-5,6,7,8-tetrahydrofolate; that stretch reads SLLP.

This sequence belongs to the Fmt family.

It catalyses the reaction L-methionyl-tRNA(fMet) + (6R)-10-formyltetrahydrofolate = N-formyl-L-methionyl-tRNA(fMet) + (6S)-5,6,7,8-tetrahydrofolate + H(+). Its function is as follows. Attaches a formyl group to the free amino group of methionyl-tRNA(fMet). The formyl group appears to play a dual role in the initiator identity of N-formylmethionyl-tRNA by promoting its recognition by IF2 and preventing the misappropriation of this tRNA by the elongation apparatus. The sequence is that of Methionyl-tRNA formyltransferase from Shigella boydii serotype 4 (strain Sb227).